We begin with the raw amino-acid sequence, 271 residues long: Phosphatidylinositol transfer protein beta isoform (271 aa).

Lys215 is subject to N6-acetyllysine. Ser262 carries the post-translational modification Phosphoserine.

Belongs to the PtdIns transfer protein family. PI transfer class I subfamily. Constitutive phosphorylation of Ser-262 has no effect on phospholipid transfer activity but is required for Golgi targeting. Widely expressed in various tissues including brain.

It localises to the golgi apparatus. It is found in the golgi apparatus membrane. The protein resides in the endoplasmic reticulum membrane. It catalyses the reaction a 1,2-diacyl-sn-glycero-3-phosphocholine(in) = a 1,2-diacyl-sn-glycero-3-phosphocholine(out). It carries out the reaction a 1,2-diacyl-sn-glycero-3-phospho-(1D-myo-inositol)(in) = a 1,2-diacyl-sn-glycero-3-phospho-(1D-myo-inositol)(out). The catalysed reaction is an N-(acyl)-sphingosylphosphocholine(in) = an N-(acyl)-sphingosylphosphocholine(out). With respect to regulation, phosphatidylinositol transfer activity is inhibited by N-ethylmaleimide. Its function is as follows. Catalyzes the transfer of phosphatidylinositol and phosphatidylcholine between membranes. Also catalyzes the transfer of sphingomyelin. Required for COPI-mediated retrograde transport from the Golgi to the endoplasmic reticulum; phosphatidylinositol and phosphatidylcholine transfer activity is essential for this function. The protein is Phosphatidylinositol transfer protein beta isoform (PITPNB) of Homo sapiens (Human).